We begin with the raw amino-acid sequence, 1253 residues long: Pleckstrin homology-like domain family B member 2 (1253 aa).

Residues Met-1–Asp-12 show a composition bias toward basic and acidic residues. Disordered regions lie at residues Met-1 to Tyr-43, Leu-60 to Asp-159, and Asp-187 to Ser-212. Residues Asn-29–Tyr-43 are compositionally biased toward polar residues. Residues Ser-71 and Ser-73 each carry the phosphoserine modification. The segment covering Pro-74–Tyr-96 has biased composition (polar residues). Residues Ala-126–Glu-144 are compositionally biased toward basic and acidic residues. Phosphoserine occurs at positions 157, 204, 212, 242, and 245. The disordered stretch occupies residues Asn-265–Leu-286. A phosphoserine mark is found at Ser-330, Ser-334, Ser-348, Ser-351, Ser-384, Ser-387, Ser-415, Ser-420, Ser-468, Ser-489, and Ser-501. Thr-504 is modified (phosphothreonine). Ser-513 carries the phosphoserine modification. A disordered region spans residues Leu-525 to Tyr-567. Residues Thr-550 and Thr-574 each carry the phosphothreonine modification. 2 coiled-coil regions span residues Ser-584–Cys-696 and Phe-722–Leu-807. Residue Thr-898 is modified to Phosphothreonine. The stretch at Ile-1032–Ile-1098 forms a coiled coil. Positions Glu-1143 to Glu-1246 constitute a PH domain.

In terms of assembly, interacts with FLNC. Interacts with AMOTL2; interaction may facilitate PHLDB2 localization to the myotube podosome cortex that surrounds the core. Part of a cortical microtubule stabilization complex (CMSC) composed of KANK1, PPFIA1, PPFIBP1, ERC1/ELKS, PHLDB2/LL5beta, CLASPs, KIF21A and possibly additional interactors; within CMSCs KANK1 and PHLDB2/LL5beta appear to be the core components for targeting of microtubule-binding proteins KIF21A and CLASPs, whereas PPFIA1, PPFIBP1 and ERC1/ELKS serve as scaffolds for protein clustering.

It localises to the cytoplasm. The protein resides in the cell cortex. The protein localises to the membrane. Its subcellular location is the cell projection. It is found in the podosome. Functionally, seems to be involved in the assembly of the postsynaptic apparatus. May play a role in acetyl-choline receptor (AChR) aggregation in the postsynaptic membrane. In Homo sapiens (Human), this protein is Pleckstrin homology-like domain family B member 2 (PHLDB2).